Here is a 230-residue protein sequence, read N- to C-terminus: Cytochrome c oxidase subunit 2 (230 aa).

At 1-14 (MAHPTQLGFQDAAS) the chain is on the mitochondrial intermembrane side. The chain crosses the membrane as a helical span at residues 15 to 45 (PVMEELLHFHDHALMIVFLISTLVLYIIIAM). The Mitochondrial matrix segment spans residues 46–59 (VSTKLTNKYILDSQ). Residues 60-87 (EIEIVWTILPAVILVLIALPSLRILYLM) form a helical membrane-spanning segment. At 88–230 (DEINDPHLTI…NWSSLMLEDA (143 aa)) the chain is on the mitochondrial intermembrane side. H161, C196, E198, C200, H204, and M207 together coordinate Cu cation. Residue E198 participates in Mg(2+) binding.

This sequence belongs to the cytochrome c oxidase subunit 2 family. As to quaternary structure, component of the cytochrome c oxidase (complex IV, CIV), a multisubunit enzyme composed of 14 subunits. The complex is composed of a catalytic core of 3 subunits MT-CO1, MT-CO2 and MT-CO3, encoded in the mitochondrial DNA, and 11 supernumerary subunits COX4I, COX5A, COX5B, COX6A, COX6B, COX6C, COX7A, COX7B, COX7C, COX8 and NDUFA4, which are encoded in the nuclear genome. The complex exists as a monomer or a dimer and forms supercomplexes (SCs) in the inner mitochondrial membrane with NADH-ubiquinone oxidoreductase (complex I, CI) and ubiquinol-cytochrome c oxidoreductase (cytochrome b-c1 complex, complex III, CIII), resulting in different assemblies (supercomplex SCI(1)III(2)IV(1) and megacomplex MCI(2)III(2)IV(2)). Found in a complex with TMEM177, COA6, COX18, COX20, SCO1 and SCO2. Interacts with TMEM177 in a COX20-dependent manner. Interacts with COX20. Interacts with COX16. It depends on Cu cation as a cofactor.

The protein resides in the mitochondrion inner membrane. The enzyme catalyses 4 Fe(II)-[cytochrome c] + O2 + 8 H(+)(in) = 4 Fe(III)-[cytochrome c] + 2 H2O + 4 H(+)(out). Its function is as follows. Component of the cytochrome c oxidase, the last enzyme in the mitochondrial electron transport chain which drives oxidative phosphorylation. The respiratory chain contains 3 multisubunit complexes succinate dehydrogenase (complex II, CII), ubiquinol-cytochrome c oxidoreductase (cytochrome b-c1 complex, complex III, CIII) and cytochrome c oxidase (complex IV, CIV), that cooperate to transfer electrons derived from NADH and succinate to molecular oxygen, creating an electrochemical gradient over the inner membrane that drives transmembrane transport and the ATP synthase. Cytochrome c oxidase is the component of the respiratory chain that catalyzes the reduction of oxygen to water. Electrons originating from reduced cytochrome c in the intermembrane space (IMS) are transferred via the dinuclear copper A center (CU(A)) of subunit 2 and heme A of subunit 1 to the active site in subunit 1, a binuclear center (BNC) formed by heme A3 and copper B (CU(B)). The BNC reduces molecular oxygen to 2 water molecules using 4 electrons from cytochrome c in the IMS and 4 protons from the mitochondrial matrix. The protein is Cytochrome c oxidase subunit 2 (mt-co2) of Carassius auratus (Goldfish).